A 185-amino-acid chain; its full sequence is HTH-type transcriptional regulator SAB2452 (185 aa).

The HTH tetR-type domain occupies 6–66 (IENRQRIEEI…YVIQRDLNTF (61 aa)). A DNA-binding region (H-T-H motif) is located at residues 29–48 (SMNRIAKELGIGMGTLYRHF).

This Staphylococcus aureus (strain bovine RF122 / ET3-1) protein is HTH-type transcriptional regulator SAB2452.